Here is a 959-residue protein sequence, read N- to C-terminus: Vacuolar membrane protease (959 aa).

The Cytoplasmic segment spans residues 1–13; sequence MARLNPLSFTPGP. The chain crosses the membrane as a helical span at residues 14–34; sequence VIFFTCAVYIALFAALLTVHL. The Vacuolar portion of the chain corresponds to 35–378; it reads RVPDYPSKTP…KVFVVFQLHT (344 aa). N-linked (GlcNAc...) asparagine glycans are attached at residues N48, N102, and N105. Residues 128–149 form a disordered region; it reads GSEDDEPYHSPQSSPPGERRLD. 2 residues coordinate Zn(2+): H158 and D170. Residue E204 is the Proton acceptor of the active site. 3 residues coordinate Zn(2+): E205, E230, and H303. Residues 379-399 form a helical membrane-spanning segment; that stretch reads MFALCVTLLVVAPLFLIGLTF. Residues 400 to 432 lie on the Cytoplasmic side of the membrane; it reads GLSKADKNYLFARKAYMYSSDDDHPVHLYGWRG. The helical transmembrane segment at 433 to 453 threads the bilayer; the sequence is FFRFPIVFSIATAVVVGLAYL. Over 454 to 463 the chain is Vacuolar; sequence MVRLNPLILY. Residues 464 to 484 traverse the membrane as a helical segment; the sequence is SSPYAVWSMMLSAWFSVAWFF. Residues 485-498 lie on the Cytoplasmic side of the membrane; it reads SRGASAMRPSALQR. The chain crosses the membrane as a helical span at residues 499-519; it reads MYALIWLFAGSFALLAFVTVL. At 520–524 the chain is on the vacuolar side; sequence SNNYQ. The chain crosses the membrane as a helical span at residues 525–545; sequence VAGGYFALFYFAGIFLALVLS. Over 546–645 the chain is Cytoplasmic; sequence YLELFFAPTK…YPGEQDWSGK (100 aa). Disordered stretches follow at residues 566-594 and 606-635; these read DEPV…DATE and FARH…LKQP. Residues 612-626 show a composition bias toward basic and acidic residues; that stretch reads RRDSIDDENGNRDEE. Residues 646–666 traverse the membrane as a helical segment; that stretch reads LPGWLWLLQLLLVAPIVVILV. At 667-688 the chain is on the vacuolar side; sequence GQIALLLTSALHQTPADGNSSL. N685 is a glycosylation site (N-linked (GlcNAc...) asparagine). The chain crosses the membrane as a helical span at residues 689-709; it reads FVYLAFALLTTLLLAPIGPFI. Residues 710–716 lie on the Cytoplasmic side of the membrane; it reads HRFTWHV. A helical transmembrane segment spans residues 717–737; the sequence is PTFVFLVCVATVIYNLVAFPF. The Vacuolar segment spans residues 738 to 959; sequence SREHRLKVYF…LVEGFKYFQV (222 aa). Residues N785, N818, N834, N864, and N899 are each glycosylated (N-linked (GlcNAc...) asparagine).

The protein belongs to the peptidase M28 family. It depends on Zn(2+) as a cofactor.

Its subcellular location is the vacuole membrane. Functionally, may be involved in vacuolar sorting and osmoregulation. The polypeptide is Vacuolar membrane protease (Phaeosphaeria nodorum (strain SN15 / ATCC MYA-4574 / FGSC 10173) (Glume blotch fungus)).